The following is a 212-amino-acid chain: Uracil phosphoribosyltransferase (212 aa).

5-phospho-alpha-D-ribose 1-diphosphate is bound by residues Arg-78, Arg-103, and Asp-130 to Ser-138. Residues Ile-193 and Gly-198–Ala-200 contribute to the uracil site. A 5-phospho-alpha-D-ribose 1-diphosphate-binding site is contributed by Asp-199.

It belongs to the UPRTase family. Mg(2+) serves as cofactor.

It catalyses the reaction UMP + diphosphate = 5-phospho-alpha-D-ribose 1-diphosphate + uracil. It functions in the pathway pyrimidine metabolism; UMP biosynthesis via salvage pathway; UMP from uracil: step 1/1. Allosterically activated by GTP. Catalyzes the conversion of uracil and 5-phospho-alpha-D-ribose 1-diphosphate (PRPP) to UMP and diphosphate. The protein is Uracil phosphoribosyltransferase of Pseudomonas fluorescens (strain Pf0-1).